The following is a 358-amino-acid chain: tRNA-specific 2-thiouridylase MnmA (358 aa).

ATP-binding positions include 8–15 and Leu34; that span reads GLSGGVDS. The Nucleophile role is filled by Cys95. Cys95 and Cys194 are oxidised to a cystine. An ATP-binding site is contributed by Gly120. The interval 144-146 is interaction with tRNA; sequence KDQ. Catalysis depends on Cys194, which acts as the Cysteine persulfide intermediate. The tract at residues 299–300 is interaction with tRNA; sequence RY.

It belongs to the MnmA/TRMU family.

Its subcellular location is the cytoplasm. The enzyme catalyses S-sulfanyl-L-cysteinyl-[protein] + uridine(34) in tRNA + AH2 + ATP = 2-thiouridine(34) in tRNA + L-cysteinyl-[protein] + A + AMP + diphosphate + H(+). Its function is as follows. Catalyzes the 2-thiolation of uridine at the wobble position (U34) of tRNA, leading to the formation of s(2)U34. The polypeptide is tRNA-specific 2-thiouridylase MnmA (Synechocystis sp. (strain ATCC 27184 / PCC 6803 / Kazusa)).